A 163-amino-acid chain; its full sequence is Pheromone-binding protein 1 (163 aa).

Residues 1–21 (MLGKISLLLLPVFVAINLVHS) form the signal peptide. 3 disulfides stabilise this stretch: Cys40–Cys75, Cys71–Cys129, and Cys118–Cys138.

Belongs to the PBP/GOBP family. In terms of tissue distribution, antenna.

Its function is as follows. This major soluble protein in olfactory sensilla of male moths might serve to solubilize the extremely hydrophobic pheromone molecules and to transport pheromone through the aqueous lymph to receptors located on olfactory cilia. This is Pheromone-binding protein 1 from Antheraea pernyi (Chinese oak silk moth).